The following is a 548-amino-acid chain: Glucose-6-phosphate isomerase 1 (548 aa).

The Proton donor role is filled by E353. Catalysis depends on residues H384 and K512.

It belongs to the GPI family.

The protein localises to the cytoplasm. It catalyses the reaction alpha-D-glucose 6-phosphate = beta-D-fructose 6-phosphate. It functions in the pathway carbohydrate biosynthesis; gluconeogenesis. Its pathway is carbohydrate degradation; glycolysis; D-glyceraldehyde 3-phosphate and glycerone phosphate from D-glucose: step 2/4. Its function is as follows. Catalyzes the reversible isomerization of glucose-6-phosphate to fructose-6-phosphate. In Neisseria gonorrhoeae (strain ATCC 700825 / FA 1090), this protein is Glucose-6-phosphate isomerase 1.